The sequence spans 190 residues: MTATPKFAHVVLQTSRFEAMRDWYCTVLDAHVVYEGHGLCFITFDEEHHRVALLGAPTALEPRNPGAAGMHHTAYTFDTLGDLLDRYESLKSKGIEPKVPIQHGVTTSLYYQDPDGNFVELQIDNFSTPDEATAYMNGPEYGGNPVGVSFDPVLIPQALSAGTPVDRITTHAWALETTPDLPNPMIALTS.

The 119-residue stretch at 6-124 (KFAHVVLQTS…DGNFVELQID (119 aa)) folds into the VOC domain. Residues His9, His72, and Glu120 each contribute to the Fe cation site.

The protein belongs to the extradiol ring-cleavage dioxygenase family. As to quaternary structure, homohexamer. Requires Fe(2+) as cofactor.

It catalyses the reaction biphenyl-2,3-diol + O2 = 2-hydroxy-6-oxo-6-phenylhexa-2,4-dienoate + H(+). Its pathway is xenobiotic degradation; biphenyl degradation; 2-hydroxy-2,4-pentadienoate and benzoate from biphenyl: step 3/4. The sequence is that of Biphenyl-2,3-diol 1,2-dioxygenase 2 (bphC2) from Rhodococcus globerulus.